A 239-amino-acid polypeptide reads, in one-letter code: Probable transcriptional regulatory protein Pnuc_0618 (239 aa).

Residues 1 to 21 form a disordered region; sequence MAGHSKWANIQHRKGRQDEKR.

This sequence belongs to the TACO1 family.

It is found in the cytoplasm. This Polynucleobacter asymbioticus (strain DSM 18221 / CIP 109841 / QLW-P1DMWA-1) (Polynucleobacter necessarius subsp. asymbioticus) protein is Probable transcriptional regulatory protein Pnuc_0618.